Here is an 803-residue protein sequence, read N- to C-terminus: Bromodomain-containing protein 2 (803 aa).

M1 is subject to N-acetylmethionine. Residue T6 is modified to Phosphothreonine. S37 bears the Phosphoserine mark. A disordered region spans residues 53 to 73 (ALQLTPANPPPPEVSNPKKPG). Residues 74-180 (RVTNQLQYLH…KIFLQKVASM (107 aa)) enclose the Bromo 1 domain. Positions 112, 155, 156, 157, 160, and 161 each coordinate a protein. Disordered regions lie at residues 268-348 (PPAQ…KLSE), 456-652 (EPLE…KRQL), and 739-803 (EKRL…SDSG). Over residues 285 to 298 (TTTPTPTAILAPGS) the composition is skewed to low complexity. Residues S298 and S301 each carry the phosphoserine modification. A compositionally biased stretch (basic and acidic residues) spans 316 to 332 (VRRESGRPIKPPRKDLP). The Bromo 2 domain maps to 344-453 (GKLSEQLKHC…DVFEFRYAKM (110 aa)). The span at 481-515 (SSEESSSESSSEEEEEEDEDEEEEEEESESSDSEE) shows a compositional bias: acidic residues. Basic residues predominate over residues 545–567 (KPKRKREKKEKKKKRKAEKHRGR). Positions 556–560 (KKKRK) match the Nuclear localization signal motif. Residues 623–632 (KTAPPALPAG) are compositionally biased toward low complexity. In terms of domain architecture, NET spans 634–716 (DSEEEEESRP…SCLRKKPRKP (83 aa)). S635 bears the Phosphoserine mark. The span at 641–652 (SRPMSYDEKRQL) shows a compositional bias: basic and acidic residues. Residues 777–797 (SASSSSSDSSSSSSSSSSSDT) are compositionally biased toward low complexity.

Belongs to the BET family. Homodimer. Interacts with E2F1. Interacts with (acetylated) STAT3; promoting STAT3 recruitment to chromatin. Interacts with CTCF; promoting BRD2 recruitment to chromatin.

The protein localises to the nucleus. It is found in the chromosome. Its function is as follows. Chromatin reader protein that specifically recognizes and binds histone H4 acetylated at 'Lys-5' and 'Lys-12' (H4K5ac and H4K12ac, respectively), thereby controlling gene expression and remodeling chromatin structures. Recruits transcription factors and coactivators to target gene sites, and activates RNA polymerase II machinery for transcriptional elongation. Plays a key role in genome compartmentalization via its association with CTCF and cohesin: recruited to chromatin by CTCF and promotes formation of topologically associating domains (TADs) via its ability to bind acetylated histones, contributing to CTCF boundary formation and enhancer insulation. Also recognizes and binds acetylated non-histone proteins, such as STAT3. Involved in inflammatory response by regulating differentiation of naive CD4(+) T-cells into T-helper Th17: recognizes and binds STAT3 acetylated at 'Lys-87', promoting STAT3 recruitment to chromatin. In addition to acetylated lysines, also recognizes and binds lysine residues on histones that are both methylated and acetylated on the same side chain to form N6-acetyl-N6-methyllysine (Kacme), an epigenetic mark of active chromatin associated with increased transcriptional initiation. Specifically binds histone H4 acetyl-methylated at 'Lys-5' and 'Lys-12' (H4K5acme and H4K12acme, respectively). The sequence is that of Bromodomain-containing protein 2 (BRD2) from Bos taurus (Bovine).